Reading from the N-terminus, the 997-residue chain is Protein argonaute 5 (997 aa).

Gly residues-rich tracts occupy residues methionine 1–arginine 16 and glycine 43–glycine 59. Residues methionine 1–alanine 144 form a disordered region. The segment covering serine 93 to serine 106 has biased composition (low complexity). Residues valine 116 to glutamate 129 are compositionally biased toward polar residues. The PAZ domain occupies valine 360 to glutamate 471. One can recognise a Piwi domain in the interval leucine 638–glutamate 958. The a divalent metal cation site is built by aspartate 721 and aspartate 807. Interaction with guide RNA stretches follow at residues lysine 847–arginine 848, histidine 893–arginine 901, and tyrosine 930–arginine 952. An a divalent metal cation-binding site is contributed by histidine 947.

Belongs to the argonaute family. Ago subfamily. Mg(2+) is required as a cofactor. The cofactor is Mn(2+).

Involved in RNA-mediated post-transcriptional gene silencing (PTGS). Main component of the RNA-induced silencing complex (RISC) that binds to a short guide RNA such as a microRNA (miRNA) or small interfering RNA (siRNA). RISC uses the mature miRNA or siRNA as a guide for slicer-directed cleavage of homologous mRNAs to repress gene expression. Associates with siRNAs of various sizes, from 21-24 nucleotide in length and preferentially recruits small RNAs with a 5' terminal cytosine. Probably involved in antiviral RNA silencing. Associates with siRNAs derived from cucumber mosaic virus (CMV). Targeted by the turnip yellows virus (TuYV) protein P0 (via F-box-like domain) for probable proteasome degradation and thereby inactivating AGO5 function in RNA silencing. The sequence is that of Protein argonaute 5 (AGO5) from Arabidopsis thaliana (Mouse-ear cress).